A 698-amino-acid chain; its full sequence is Vertnin (698 aa).

It belongs to the vertnin family.

The protein resides in the nucleus. Its function is as follows. Acts as a transcription factor that regulates development of thoracic vertebrae. In Sus scrofa (Pig), this protein is Vertnin (VRTN).